An 840-amino-acid chain; its full sequence is Protein argonaute-2 (840 aa).

The 120-residue stretch at 210-329 folds into the PAZ domain; that stretch reads PVIEFVCEVL…LPLEVCNIVA (120 aa). A Phosphoserine modification is found at serine 368. In terms of domain architecture, Piwi spans 498-799; it reads LVVVILPGKT…VAFRARYHLV (302 aa). Residues aspartate 578 and aspartate 650 each contribute to the a divalent metal cation site. Position 681 is a 4-hydroxyproline (proline 681). Histidine 788 serves as a coordination point for a divalent metal cation. Phosphoserine occurs at positions 805, 809, 812, and 815.

This sequence belongs to the argonaute family. Ago subfamily. In terms of assembly, interacts with DICER1 through its Piwi domain and with TARBP2 during assembly of the RNA-induced silencing complex (RISC). Together, DICER1, AGO2 and TARBP2 constitute the trimeric RISC loading complex (RLC), or micro-RNA (miRNA) loading complex (miRLC). Within the RLC/miRLC, DICER1 and TARBP2 are required to process precursor miRNAs (pre-miRNAs) to mature miRNAs and then load them onto AGO2. AGO2 bound to the mature miRNA constitutes the minimal RISC and may subsequently dissociate from DICER1 and TARBP2. Note however that the term RISC has also been used to describe the trimeric RLC/miRLC. The formation of RISC complexes containing siRNAs rather than miRNAs appears to occur independently of DICER1. Interacts with AGO1. Also interacts with DDB1, DDX5, DDX6, DDX20, DHX30, DHX36, DDX47, DHX9, ELAVL, FXR1, GEMIN4, HNRNPF, IGF2BP1, ILF3, IMP8, MATR3, PABPC1, PRMT5, P4HA1, P4HB, RBM4, SART3, TNRC6A, TNRC6B, UPF1 and YBX1. Interacts with the P-body components DCP1A and XRN1. Associates with polysomes and messenger ribonucleoproteins (mNRPs). Interacts with RBM4; the interaction is modulated under stress-induced conditions, occurs under both cell proliferation and differentiation conditions and in an RNA- and phosphorylation-independent manner. Interacts with LIMD1, WTIP and AJUBA. Interacts with TRIM71; the interaction increases in presence of RNA. Interacts with APOBEC3G in an RNA-dependent manner. Interacts with APOBEC3A, APOBEC3C, APOBEC3F and APOBEC3H. Interacts with DICER1, TARBP2, EIF6, MOV10 and RPL7A (60S ribosome subunit); they form a large RNA-induced silencing complex (RISC). Interacts with FMR1. Interacts with ZFP36. Interacts with RC3H1; the interaction is RNA independent. Found in a complex composed of AGO2, CHD7 and ARB2A. Interacts with SND1 and SYT11. Interacts with CLNK. Interacts with GARRE1. Hydroxylated. 4-hydroxylation appears to enhance protein stability but is not required for miRNA-binding or endonuclease activity. In terms of processing, ubiquitinated on surface-exposed lysines by a SCF-like E3 ubiquitin-protein ligase complex containing ZSWIM8 during target-directed microRNA degradation (TDMD), a process that mediates degradation of microRNAs (miRNAs). Ubiquitination by the SCF-like E3 ubiquitin-protein ligase complex containing ZSWIM8 leads to its subsequent degradation, thereby exposing miRNAs for degradation. ZSWIM8 recognizes and binds AGO2 when it is engaged with a TDMD target. Post-translationally, phosphorylation at Ser-368 by AKT3; leads to up-regulate translational repression of microRNA target and down-regulate endonucleolytic cleavage. A phosphorylation cycle of C-terminal serine cluster (Ser-805-Ser-815) regulates the release of target mRNAs. Target-binding leads to phosphorylation of these residues by CSNK1A1, which reduces the affinity of AGO2 for mRNA and enables target release. The ANKRD52-PPP6C phosphatase complex dephosphorylates the residues, which primes AGO2 for binding a new target.

It localises to the cytoplasm. It is found in the P-body. The protein localises to the nucleus. It carries out the reaction Endonucleolytic cleavage to 5'-phosphomonoester.. Required for RNA-mediated gene silencing (RNAi) by the RNA-induced silencing complex (RISC). The 'minimal RISC' appears to include AGO2 bound to a short guide RNA such as a microRNA (miRNA) or short interfering RNA (siRNA). These guide RNAs direct RISC to complementary mRNAs that are targets for RISC-mediated gene silencing. The precise mechanism of gene silencing depends on the degree of complementarity between the miRNA or siRNA and its target. Binding of RISC to a perfectly complementary mRNA generally results in silencing due to endonucleolytic cleavage of the mRNA specifically by AGO2. Binding of RISC to a partially complementary mRNA results in silencing through inhibition of translation, and this is independent of endonuclease activity. May inhibit translation initiation by binding to the 7-methylguanosine cap, thereby preventing the recruitment of the translation initiation factor eIF4-E. May also inhibit translation initiation via interaction with EIF6, which itself binds to the 60S ribosomal subunit and prevents its association with the 40S ribosomal subunit. The inhibition of translational initiation leads to the accumulation of the affected mRNA in cytoplasmic processing bodies (P-bodies), where mRNA degradation may subsequently occur. In some cases RISC-mediated translational repression is also observed for miRNAs that perfectly match the 3' untranslated region (3'-UTR). Can also up-regulate the translation of specific mRNAs under certain growth conditions. Binds to the AU element of the 3'-UTR of the TNF (TNF-alpha) mRNA and up-regulates translation under conditions of serum starvation. Also required for transcriptional gene silencing (TGS), in which short RNAs known as antigene RNAs or agRNAs direct the transcriptional repression of complementary promoter regions. The chain is Protein argonaute-2 (AGO2) from Oryctolagus cuniculus (Rabbit).